The sequence spans 85 residues: ATP synthase subunit c (85 aa).

Helical transmembrane passes span G10–G30 and A65–V85.

Belongs to the ATPase C chain family. As to quaternary structure, F-type ATPases have 2 components, F(1) - the catalytic core - and F(0) - the membrane proton channel. F(1) has five subunits: alpha(3), beta(3), gamma(1), delta(1), epsilon(1). F(0) has three main subunits: a(1), b(2) and c(10-14). The alpha and beta chains form an alternating ring which encloses part of the gamma chain. F(1) is attached to F(0) by a central stalk formed by the gamma and epsilon chains, while a peripheral stalk is formed by the delta and b chains.

It is found in the cell inner membrane. In terms of biological role, f(1)F(0) ATP synthase produces ATP from ADP in the presence of a proton or sodium gradient. F-type ATPases consist of two structural domains, F(1) containing the extramembraneous catalytic core and F(0) containing the membrane proton channel, linked together by a central stalk and a peripheral stalk. During catalysis, ATP synthesis in the catalytic domain of F(1) is coupled via a rotary mechanism of the central stalk subunits to proton translocation. Key component of the F(0) channel; it plays a direct role in translocation across the membrane. A homomeric c-ring of between 10-14 subunits forms the central stalk rotor element with the F(1) delta and epsilon subunits. The sequence is that of ATP synthase subunit c from Thermotoga maritima (strain ATCC 43589 / DSM 3109 / JCM 10099 / NBRC 100826 / MSB8).